Reading from the N-terminus, the 208-residue chain is Fucoxanthin-chlorophyll a-c binding protein, chloroplastic (208 aa).

A chloroplast-targeting transit peptide spans 1–31; that stretch reads MMTLASLPSTAIAGLASAAPKVQPRMAANDE. Residues 102–118 traverse the membrane as a helical segment; the sequence is IPQLPYWLWIVMTIGIG.

The protein belongs to the fucoxanthin chlorophyll protein family. The LHC complex of chromophytic algae is composed of fucoxanthin, chlorophyll A and C bound non-covalently by fucoxanthin chlorophyll proteins (FCPs). The ratio of pigments in this LHC is; fucoxanthin: chlorophyll C: chlorophyll A; (0.6-1): (0.1-0.3): (1).

It localises to the plastid. Its subcellular location is the chloroplast thylakoid membrane. Its function is as follows. The light-harvesting complex (LHC) functions as a light receptor, it captures and delivers excitation energy to photosystems with which it is closely associated. Energy is transferred from the carotenoid and chlorophyll C (or B) to chlorophyll A and the photosynthetic reaction centers where it is used to synthesize ATP and reducing power. In Isochrysis galbana (Marine planktonic alga), this protein is Fucoxanthin-chlorophyll a-c binding protein, chloroplastic (FCP).